The following is a 119-amino-acid chain: Large ribosomal subunit protein bL20 (119 aa).

This sequence belongs to the bacterial ribosomal protein bL20 family.

Its function is as follows. Binds directly to 23S ribosomal RNA and is necessary for the in vitro assembly process of the 50S ribosomal subunit. It is not involved in the protein synthesizing functions of that subunit. This Clostridium tetani (strain Massachusetts / E88) protein is Large ribosomal subunit protein bL20.